The sequence spans 671 residues: DNA ligase (671 aa).

NAD(+) contacts are provided by residues 31–35 (DAEYD), 80–81 (SL), and Glu110. Lys112 acts as the N6-AMP-lysine intermediate in catalysis. Arg133, Glu167, Lys283, and Lys307 together coordinate NAD(+). Residues Cys401, Cys404, Cys419, and Cys424 each contribute to the Zn(2+) site. Positions 587 to 671 (EEELVFAGKT…YLPDEGGLNE (85 aa)) constitute a BRCT domain.

Belongs to the NAD-dependent DNA ligase family. LigA subfamily. Mg(2+) is required as a cofactor. Requires Mn(2+) as cofactor.

The enzyme catalyses NAD(+) + (deoxyribonucleotide)n-3'-hydroxyl + 5'-phospho-(deoxyribonucleotide)m = (deoxyribonucleotide)n+m + AMP + beta-nicotinamide D-nucleotide.. Functionally, DNA ligase that catalyzes the formation of phosphodiester linkages between 5'-phosphoryl and 3'-hydroxyl groups in double-stranded DNA using NAD as a coenzyme and as the energy source for the reaction. It is essential for DNA replication and repair of damaged DNA. This chain is DNA ligase, found in Listeria monocytogenes serotype 4a (strain HCC23).